Reading from the N-terminus, the 274-residue chain is Rhamnulose-1-phosphate aldolase (274 aa).

The active site involves Glu-117. 3 residues coordinate Zn(2+): His-141, His-143, and His-212.

Belongs to the aldolase class II family. RhaD subfamily. Homotetramer. The cofactor is Zn(2+).

Its subcellular location is the cytoplasm. It carries out the reaction L-rhamnulose 1-phosphate = (S)-lactaldehyde + dihydroxyacetone phosphate. It participates in carbohydrate degradation; L-rhamnose degradation; glycerone phosphate from L-rhamnose: step 3/3. Its function is as follows. Catalyzes the reversible cleavage of L-rhamnulose-1-phosphate to dihydroxyacetone phosphate (DHAP) and L-lactaldehyde. The protein is Rhamnulose-1-phosphate aldolase of Escherichia coli O45:K1 (strain S88 / ExPEC).